Reading from the N-terminus, the 206-residue chain is LOB domain-containing protein 2 (206 aa).

Positions 1 to 20 (MMQRNSNNTSITSNISNNSS) are disordered. An LOB domain is found at 23–123 (QACASCKHQR…KSLVHNQPLI (101 aa)).

It belongs to the LOB domain-containing protein family.

This Arabidopsis thaliana (Mouse-ear cress) protein is LOB domain-containing protein 2 (LBD2).